The following is a 496-amino-acid chain: Maturase K (496 aa).

It belongs to the intron maturase 2 family. MatK subfamily.

The protein resides in the plastid. It is found in the chloroplast. Usually encoded in the trnK tRNA gene intron. Probably assists in splicing its own and other chloroplast group II introns. The sequence is that of Maturase K from Paeonia peregrina (Common peony).